A 330-amino-acid polypeptide reads, in one-letter code: Ribosomal RNA small subunit methyltransferase C (330 aa).

Belongs to the methyltransferase superfamily. RsmC family. Monomer.

It localises to the cytoplasm. It carries out the reaction guanosine(1207) in 16S rRNA + S-adenosyl-L-methionine = N(2)-methylguanosine(1207) in 16S rRNA + S-adenosyl-L-homocysteine + H(+). Its function is as follows. Specifically methylates the guanine in position 1207 of 16S rRNA in the 30S particle. In Haemophilus influenzae (strain ATCC 51907 / DSM 11121 / KW20 / Rd), this protein is Ribosomal RNA small subunit methyltransferase C.